The following is a 344-amino-acid chain: Ketol-acid reductoisomerase (NADP(+)) (344 aa).

The region spanning 2-181 (AKVLYEKDIQ…GAARAGVLET (180 aa)) is the KARI N-terminal Rossmann domain. NADP(+)-binding positions include 25 to 28 (YGSQ), R48, S52, and 82 to 85 (DEMQ). H107 is an active-site residue. G133 provides a ligand contact to NADP(+). One can recognise a KARI C-terminal knotted domain in the interval 182–327 (SFQEETETDL…RELRELMPFV (146 aa)). Residues D190, E194, E226, and E230 each coordinate Mg(2+). Substrate is bound at residue S251.

This sequence belongs to the ketol-acid reductoisomerase family. Mg(2+) serves as cofactor.

It catalyses the reaction (2R)-2,3-dihydroxy-3-methylbutanoate + NADP(+) = (2S)-2-acetolactate + NADPH + H(+). The enzyme catalyses (2R,3R)-2,3-dihydroxy-3-methylpentanoate + NADP(+) = (S)-2-ethyl-2-hydroxy-3-oxobutanoate + NADPH + H(+). Its pathway is amino-acid biosynthesis; L-isoleucine biosynthesis; L-isoleucine from 2-oxobutanoate: step 2/4. It functions in the pathway amino-acid biosynthesis; L-valine biosynthesis; L-valine from pyruvate: step 2/4. Functionally, involved in the biosynthesis of branched-chain amino acids (BCAA). Catalyzes an alkyl-migration followed by a ketol-acid reduction of (S)-2-acetolactate (S2AL) to yield (R)-2,3-dihydroxy-isovalerate. In the isomerase reaction, S2AL is rearranged via a Mg-dependent methyl migration to produce 3-hydroxy-3-methyl-2-ketobutyrate (HMKB). In the reductase reaction, this 2-ketoacid undergoes a metal-dependent reduction by NADPH to yield (R)-2,3-dihydroxy-isovalerate. This is Ketol-acid reductoisomerase (NADP(+)) from Oceanobacillus iheyensis (strain DSM 14371 / CIP 107618 / JCM 11309 / KCTC 3954 / HTE831).